The sequence spans 78 residues: MARRCQLTNKKRNNAFAISHSHRRTKRLQEVNLQWKRIWWEEGKRFVRLRLSTKALKTLKAKGIGAMAREAGIDLNQF.

Belongs to the bacterial ribosomal protein bL28 family.

The polypeptide is Large ribosomal subunit protein bL28 (Synechococcus sp. (strain JA-2-3B'a(2-13)) (Cyanobacteria bacterium Yellowstone B-Prime)).